Consider the following 171-residue polypeptide: 3-hydroxydecanoyl-[acyl-carrier-protein] dehydratase (171 aa).

His70 is a catalytic residue.

Belongs to the thioester dehydratase family. FabA subfamily. In terms of assembly, homodimer.

The protein resides in the cytoplasm. The catalysed reaction is a (3R)-hydroxyacyl-[ACP] = a (2E)-enoyl-[ACP] + H2O. It catalyses the reaction (3R)-hydroxydecanoyl-[ACP] = (2E)-decenoyl-[ACP] + H2O. It carries out the reaction (2E)-decenoyl-[ACP] = (3Z)-decenoyl-[ACP]. The protein operates within lipid metabolism; fatty acid biosynthesis. Functionally, necessary for the introduction of cis unsaturation into fatty acids. Catalyzes the dehydration of (3R)-3-hydroxydecanoyl-ACP to E-(2)-decenoyl-ACP and then its isomerization to Z-(3)-decenoyl-ACP. Can catalyze the dehydratase reaction for beta-hydroxyacyl-ACPs with saturated chain lengths up to 16:0, being most active on intermediate chain length. The sequence is that of 3-hydroxydecanoyl-[acyl-carrier-protein] dehydratase from Hydrogenovibrio crunogenus (strain DSM 25203 / XCL-2) (Thiomicrospira crunogena).